Here is a 642-residue protein sequence, read N- to C-terminus: Glutamyl-tRNA(Gln) amidotransferase subunit E (642 aa).

This sequence belongs to the GatB/GatE family. GatE subfamily. In terms of assembly, heterodimer of GatD and GatE.

The enzyme catalyses L-glutamyl-tRNA(Gln) + L-glutamine + ATP + H2O = L-glutaminyl-tRNA(Gln) + L-glutamate + ADP + phosphate + H(+). In terms of biological role, allows the formation of correctly charged Gln-tRNA(Gln) through the transamidation of misacylated Glu-tRNA(Gln) in organisms which lack glutaminyl-tRNA synthetase. The reaction takes place in the presence of glutamine and ATP through an activated gamma-phospho-Glu-tRNA(Gln). The GatDE system is specific for glutamate and does not act on aspartate. The chain is Glutamyl-tRNA(Gln) amidotransferase subunit E from Aeropyrum pernix (strain ATCC 700893 / DSM 11879 / JCM 9820 / NBRC 100138 / K1).